Here is a 192-residue protein sequence, read N- to C-terminus: Imidazoleglycerol-phosphate dehydratase (192 aa).

This sequence belongs to the imidazoleglycerol-phosphate dehydratase family.

The protein resides in the cytoplasm. It carries out the reaction D-erythro-1-(imidazol-4-yl)glycerol 3-phosphate = 3-(imidazol-4-yl)-2-oxopropyl phosphate + H2O. Its pathway is amino-acid biosynthesis; L-histidine biosynthesis; L-histidine from 5-phospho-alpha-D-ribose 1-diphosphate: step 6/9. The polypeptide is Imidazoleglycerol-phosphate dehydratase (Staphylococcus epidermidis (strain ATCC 35984 / DSM 28319 / BCRC 17069 / CCUG 31568 / BM 3577 / RP62A)).